The chain runs to 66 residues: DNA-directed RNA polymerase subunit Rpo10 (66 aa).

Cys-7, Cys-10, Cys-47, and Cys-48 together coordinate Zn(2+).

Belongs to the archaeal Rpo10/eukaryotic RPB10 RNA polymerase subunit family. Part of the RNA polymerase complex. Requires Zn(2+) as cofactor.

It localises to the cytoplasm. The catalysed reaction is RNA(n) + a ribonucleoside 5'-triphosphate = RNA(n+1) + diphosphate. Functionally, DNA-dependent RNA polymerase (RNAP) catalyzes the transcription of DNA into RNA using the four ribonucleoside triphosphates as substrates. This is DNA-directed RNA polymerase subunit Rpo10 from Halobacterium salinarum (strain ATCC 29341 / DSM 671 / R1).